The following is a 286-amino-acid chain: Meiotically up-regulated gene 64 protein (286 aa).

It localises to the cytoplasm. Its function is as follows. Has a role in meiosis. The protein is Meiotically up-regulated gene 64 protein (mug64) of Schizosaccharomyces pombe (strain 972 / ATCC 24843) (Fission yeast).